A 65-amino-acid chain; its full sequence is Small ribosomal subunit protein eS17 (65 aa).

This sequence belongs to the eukaryotic ribosomal protein eS17 family.

This chain is Small ribosomal subunit protein eS17, found in Methanocella arvoryzae (strain DSM 22066 / NBRC 105507 / MRE50).